Here is an 805-residue protein sequence, read N- to C-terminus: Angiotensin-converting enzyme 2 (805 aa).

The first 17 residues, 1 to 17, serve as a signal peptide directing secretion; sequence MSGSSWLLLSLVAVTAA. Over 18 to 740 the chain is Extracellular; that stretch reads QSTIEEQAKT…LGPPNQPPVS (723 aa). The region spanning 19-607 is the Peptidase M2 domain; it reads STIEEQAKTF…QNKNSFVGWS (589 aa). N-linked (GlcNAc...) asparagine glycans are attached at residues N53, N90, and N103. Residues C133 and C141 are joined by a disulfide bond. R169 contacts chloride. R273 provides a ligand contact to substrate. N322 carries an N-linked (GlcNAc...) asparagine glycan. An intrachain disulfide couples C344 to C361. 345–346 contributes to the substrate binding site; sequence HP. A Zn(2+)-binding site is contributed by H374. The active-site Proton acceptor is the E375. Zn(2+)-binding residues include H378 and E402. N432 carries N-linked (GlcNAc...) asparagine glycosylation. Residues W477 and K481 each contribute to the chloride site. H505 acts as the Proton donor in catalysis. Y515 serves as a coordination point for substrate. Residues C530 and C542 are joined by a disulfide bond. Residue N546 is glycosylated (N-linked (GlcNAc...) asparagine). One can recognise a Collectrin-like domain in the interval 614-805; that stretch reads ADQSIKVRIS…QNTDDVQTSF (192 aa). The essential for cleavage by ADAM17 stretch occupies residues 652-659; sequence RKYFLEVK. N690 carries an N-linked (GlcNAc...) asparagine glycan. The segment at 697 to 716 is essential for cleavage by TMPRSS11D and TMPRSS2; sequence RTEVEKAIRMSRSRINDAFR. A helical membrane pass occupies residues 741–761; that stretch reads IWLIVFGVVMGVIVVGIVVLI. Topologically, residues 762 to 805 are cytoplasmic; that stretch reads FTGIRDRKKKNKARNEENPYASIDISKGENNPGFQNTDDVQTSF. The disordered stretch occupies residues 772-805; that stretch reads NKARNEENPYASIDISKGENNPGFQNTDDVQTSF. The short motif at 778–786 is the LIR element; that stretch reads ENPYASIDI. Y781 is modified (phosphotyrosine). Residues 781–784 carry the Endocytic sorting signal motif; sequence YASI. The SH2-binding signature appears at 781 to 785; the sequence is YASID. S783 bears the Phosphoserine mark. Residue K788 forms a Glycyl lysine isopeptide (Lys-Gly) (interchain with G-Cter in ubiquitin) linkage. Residues 789–805 are compositionally biased toward polar residues; it reads GENNPGFQNTDDVQTSF. The PTB motif lies at 792-795; that stretch reads NPGF. The PDZ-binding signature appears at 803–805; it reads TSF.

It belongs to the peptidase M2 family. Homodimer. Interacts with the catalytically active form of TMPRSS2. Interacts with SLC6A19; this interaction is essential for expression and function of SLC6A19 in intestine. Interacts with ITGA5:ITGB1. Probably interacts (via endocytic sorting signal motif) with AP2M1; the interaction is inhibited by phosphorylation of Tyr-781. Interacts (via PDZ-binding motif) with NHERF1 (via PDZ domains); the interaction may enhance ACE2 membrane residence. Zn(2+) serves as cofactor. It depends on chloride as a cofactor. Post-translationally, proteolytic cleavage by ADAM17 generates a secreted form. Also cleaved by serine proteases: TMPRSS2, TMPRSS11D and HPN/TMPRSS1. In terms of processing, phosphorylated. Phosphorylation at Tyr-781 probably inhibits interaction with AP2M1 and enables interactions with proteins containing SH2 domains. Ubiquitinated. Ubiquitinated on Lys-788 via 'Lys-48'-linked ubiquitin. 'Lys-48'-linked deubiquitinated by USP50 on the Lys-788; leading to its stabilization.

It localises to the secreted. The protein resides in the cell membrane. The protein localises to the cytoplasm. It is found in the cell projection. Its subcellular location is the cilium. It localises to the apical cell membrane. The enzyme catalyses angiotensin II + H2O = angiotensin-(1-7) + L-phenylalanine. It carries out the reaction angiotensin I + H2O = angiotensin-(1-9) + L-leucine. It catalyses the reaction bradykinin(1-8) + H2O = bradykinin(1-7) + L-phenylalanine. The catalysed reaction is neurotensin + H2O = neurotensin-(1-12) + L-leucine. The enzyme catalyses kinetensin + H2O = kinetensin-(1-8) + L-leucine. It carries out the reaction dynorphin A-(1-13) + H2O = dynorphin A-(1-12) + L-lysine. It catalyses the reaction apelin-13 + H2O = apelin-12 + L-phenylalanine. The catalysed reaction is [Pyr1]apelin-13 + H2O = [Pyr1]apelin-12 + L-phenylalanine. The enzyme catalyses apelin-17 + H2O = apelin-16 + L-phenylalanine. Essential counter-regulatory carboxypeptidase of the renin-angiotensin hormone system that is a critical regulator of blood volume, systemic vascular resistance, and thus cardiovascular homeostasis. Converts angiotensin I to angiotensin 1-9, a nine-amino acid peptide with anti-hypertrophic effects in cardiomyocytes, and angiotensin II to angiotensin 1-7, which then acts as a beneficial vasodilator and anti-proliferation agent, counterbalancing the actions of the vasoconstrictor angiotensin II. Also removes the C-terminal residue from three other vasoactive peptides, neurotensin, kinetensin, and des-Arg bradykinin, but is not active on bradykinin. Also cleaves other biological peptides, such as apelins, casomorphins and dynorphin A. Plays an important role in amino acid transport by acting as binding partner of amino acid transporter SLC6A19 in intestine, regulating trafficking, expression on the cell surface, and its catalytic activity. This is Angiotensin-converting enzyme 2 (ACE2) from Pongo abelii (Sumatran orangutan).